Consider the following 538-residue polypeptide: Bifunctional purine biosynthesis protein PurH (538 aa).

The region spanning 8-158 is the MGS-like domain; the sequence is IPAPDKVEIK…KNHAYVTTLT (151 aa).

The protein belongs to the PurH family.

The catalysed reaction is (6R)-10-formyltetrahydrofolate + 5-amino-1-(5-phospho-beta-D-ribosyl)imidazole-4-carboxamide = 5-formamido-1-(5-phospho-D-ribosyl)imidazole-4-carboxamide + (6S)-5,6,7,8-tetrahydrofolate. It catalyses the reaction IMP + H2O = 5-formamido-1-(5-phospho-D-ribosyl)imidazole-4-carboxamide. The protein operates within purine metabolism; IMP biosynthesis via de novo pathway; 5-formamido-1-(5-phospho-D-ribosyl)imidazole-4-carboxamide from 5-amino-1-(5-phospho-D-ribosyl)imidazole-4-carboxamide (10-formyl THF route): step 1/1. It functions in the pathway purine metabolism; IMP biosynthesis via de novo pathway; IMP from 5-formamido-1-(5-phospho-D-ribosyl)imidazole-4-carboxamide: step 1/1. This Rhizobium johnstonii (strain DSM 114642 / LMG 32736 / 3841) (Rhizobium leguminosarum bv. viciae) protein is Bifunctional purine biosynthesis protein PurH.